Reading from the N-terminus, the 446-residue chain is Probable polyamine aminopropyl transferase (446 aa).

Residues 1–117 are unknown; that stretch reads MVEPAIGRNH…KRIACVVSAV (117 aa). The disordered stretch occupies residues 64 to 94; that stretch reads GRGAERWHRSPRQANGRFSNQRYSSTSPNSS. The segment covering 75–94 has biased composition (polar residues); the sequence is RQANGRFSNQRYSSTSPNSS. In terms of domain architecture, PABS spans 116-351; that stretch reads AVIFVATSCV…ELFAKKPGSG (236 aa). A spermidine synthase region spans residues 118–353; it reads IFVATSCVSP…FAKKPGSGSE (236 aa). Residues Asn-147, Glu-226, and 251–252 each bind S-methyl-5'-thioadenosine; that span reads DG. The active-site Proton acceptor is the Asp-269.

This sequence belongs to the spermidine/spermine synthase family. Homodimer or homotetramer.

It is found in the cytoplasm. The catalysed reaction is S-adenosyl 3-(methylsulfanyl)propylamine + putrescine = S-methyl-5'-thioadenosine + spermidine + H(+). Its pathway is amine and polyamine biosynthesis; spermidine biosynthesis; spermidine from putrescine: step 1/1. In terms of biological role, catalyzes the irreversible transfer of a propylamine group from the amino donor S-adenosylmethioninamine (decarboxy-AdoMet) to putrescine (1,4-diaminobutane) to yield spermidine. The chain is Probable polyamine aminopropyl transferase (speE) from Bifidobacterium longum (strain NCC 2705).